A 534-amino-acid polypeptide reads, in one-letter code: uncharacterized protein (534 aa).

2 consecutive transmembrane segments (helical) span residues 149 to 169 (ILTT…SITI) and 185 to 205 (VFLV…SLIF).

The protein resides in the cell membrane. This is an uncharacterized protein from Mycoplasma pneumoniae (strain ATCC 29342 / M129 / Subtype 1) (Mycoplasmoides pneumoniae).